We begin with the raw amino-acid sequence, 2439 residues long: Protein roller-3 (2439 aa).

An N-terminal signal peptide occupies residues 1-26 (MLDFPRFSLFLFLLFSSFLFSSFVHA). At 27 to 1851 (ATVFSSSLKT…EEEKGGILPY (1825 aa)) the chain is on the extracellular side. N-linked (GlcNAc...) asparagine glycans are attached at residues Asn-64, Asn-182, Asn-334, Asn-394, Asn-496, Asn-533, Asn-657, Asn-766, Asn-868, Asn-1003, Asn-1036, Asn-1090, and Asn-1261. Residues 618–720 (KPRIVAVSSI…STSNTALPDL (103 aa)) form the Fibronectin type-III 1 domain. Fibronectin type-III domains follow at residues 1403–1503 (SKGI…TGFG), 1507–1628 (APRD…TLDV), 1629–1732 (PGTL…IQQA), and 1738–1843 (VPTA…EKEE). Residues Asn-1567, Asn-1636, Asn-1677, and Asn-1779 are each glycosylated (N-linked (GlcNAc...) asparagine). Residues 1852 to 1872 (FLGISIILLLAAMILVGCFWL) traverse the membrane as a helical segment. At 1873-2439 (KSRRRQQMKK…GGTCRSVSQV (567 aa)) the chain is on the cytoplasmic side. Residues 1928–2199 (VEIVRHISDC…ATILKIFETC (272 aa)) enclose the Protein kinase domain. ATP is bound by residues 1934 to 1942 (ISDCSYGSV) and Lys-1963. 3 disordered regions span residues 2214–2277 (NEGS…RPAT), 2315–2348 (SQRPLSIHSEDTESTDFGGATSSMHSPSSSNRTN), and 2412–2439 (HLRAPTGQPPTRVNRNSSGGTCRSVSQV). Polar residues-rich tracts occupy residues 2216–2233 (GSDNINFNASQDSTSSRE), 2334–2347 (ATSSMHSPSSSNRT), and 2420–2439 (PPTRVNRNSSGGTCRSVSQV).

The protein localises to the membrane. In terms of biological role, involved in larval development and locomotion. This Caenorhabditis briggsae protein is Protein roller-3.